A 463-amino-acid polypeptide reads, in one-letter code: Soluble pyridine nucleotide transhydrogenase (463 aa).

Glutamate 35–cysteine 44 is an FAD binding site.

It belongs to the class-I pyridine nucleotide-disulfide oxidoreductase family. Requires FAD as cofactor.

The protein resides in the cytoplasm. The catalysed reaction is NAD(+) + NADPH = NADH + NADP(+). Conversion of NADPH, generated by peripheral catabolic pathways, to NADH, which can enter the respiratory chain for energy generation. This chain is Soluble pyridine nucleotide transhydrogenase, found in Marinobacter nauticus (strain ATCC 700491 / DSM 11845 / VT8) (Marinobacter aquaeolei).